A 123-amino-acid chain; its full sequence is Putative EG45-like domain containing protein 1 (123 aa).

The first 21 residues, 1-21 (MSKSIVFFSTVLVFLFSFSYA), serve as a signal peptide directing secretion. In terms of domain architecture, Expansin-like EG45 spans 24–123 (GIATFYTSYT…AGIINIDYFP (100 aa)).

The protein resides in the secreted. In terms of biological role, might have a systemic role in water and solute homeostasis. The chain is Putative EG45-like domain containing protein 1 (EGC1) from Arabidopsis thaliana (Mouse-ear cress).